Reading from the N-terminus, the 1163-residue chain is Putative beta-glucuronidase (1163 aa).

The N-terminal stretch at 1–20 is a signal peptide; that stretch reads MPRFLKYILGLFLISISAFG.

Belongs to the glycosyl hydrolase 2 family.

It localises to the periplasm. The enzyme catalyses a beta-D-glucuronoside + H2O = D-glucuronate + an alcohol. In terms of biological role, glycoside hydrolase involved in ulvan degradation. Ulvan is the main polysaccharide component of the Ulvales (green seaweed) cell wall. It is composed of disaccharide building blocks comprising 3-sulfated rhamnose (Rha3S) linked to D-glucuronic acid (GlcA), L-iduronic acid (IduA), or D-xylose (Xyl). The sequence is that of Putative beta-glucuronidase from Formosa agariphila (strain DSM 15362 / KCTC 12365 / LMG 23005 / KMM 3901 / M-2Alg 35-1).